The sequence spans 452 residues: Tubulin alpha-2/alpha-4 chain (452 aa).

Gln11 provides a ligand contact to GTP. Lys40 is subject to N6-acetyllysine. GTP contacts are provided by Glu71, Ser140, Gly144, Thr145, Thr179, Asn206, and Asn228. Glu71 provides a ligand contact to Mg(2+). Residue Glu254 is part of the active site. A disordered region spans residues 432 to 452 (YEEVGVDSVEGEGEEEGGEEY).

The protein belongs to the tubulin family. Dimer of alpha and beta chains. A typical microtubule is a hollow water-filled tube with an outer diameter of 25 nm and an inner diameter of 15 nM. Alpha-beta heterodimers associate head-to-tail to form protofilaments running lengthwise along the microtubule wall with the beta-tubulin subunit facing the microtubule plus end conferring a structural polarity. Microtubules usually have 13 protofilaments but different protofilament numbers can be found in some organisms and specialized cells. The cofactor is Mg(2+). Post-translationally, undergoes a tyrosination/detyrosination cycle, the cyclic removal and re-addition of a C-terminal tyrosine residue by the enzymes tubulin tyrosine carboxypeptidase (TTCP) and tubulin tyrosine ligase (TTL), respectively. Acetylation of alpha chains at Lys-40 stabilizes microtubules and affects affinity and processivity of microtubule motors. This modification has a role in multiple cellular functions, ranging from cell motility, cell cycle progression or cell differentiation to intracellular trafficking and signaling.

It localises to the cytoplasm. It is found in the cytoskeleton. It carries out the reaction GTP + H2O = GDP + phosphate + H(+). In terms of biological role, tubulin is the major constituent of microtubules, a cylinder consisting of laterally associated linear protofilaments composed of alpha- and beta-tubulin heterodimers. Microtubules grow by the addition of GTP-tubulin dimers to the microtubule end, where a stabilizing cap forms. Below the cap, tubulin dimers are in GDP-bound state, owing to GTPase activity of alpha-tubulin. The chain is Tubulin alpha-2/alpha-4 chain (TUB2) from Patella vulgata (Common limpet).